A 229-amino-acid chain; its full sequence is Probable transmembrane reductase CYB561D1 (229 aa).

At 1 to 24 (MHSMEVGLVPAPAREPRLTRWLRR) the chain is on the cytoplasmic side. In terms of domain architecture, Cytochrome b561 spans 22-224 (LRRGSGILAH…HQISSSYLPR (203 aa)). A helical membrane pass occupies residues 25 to 45 (GSGILAHLIALGFTIFLTVLS). The Lumenal portion of the chain corresponds to 46–53 (RPGTSLFS). A helical membrane pass occupies residues 54 to 74 (WHPVFMALAFCLCMAEAILLF). Position 55 (H55) interacts with heme b. Over 75 to 91 (SPEHSLFFFCSRKTRIR) the chain is Cytoplasmic. Residues 92 to 112 (LHWAGQTMAILCAVLGLGFII) traverse the membrane as a helical segment. H93 and H127 together coordinate heme b. Residues 113 to 128 (SSKIRSEMSHLVSWHS) are Lumenal-facing. Residues 129 to 149 (WIGALTLLATGGQALCGLCLL) traverse the membrane as a helical segment. Over 150-169 (CPRAARVSRVARLKLYHLTC) the chain is Cytoplasmic. A heme b-binding site is contributed by H166. The chain crosses the membrane as a helical span at residues 170 to 190 (GLVVYLMATVTVLLGMYSVWF). Residues 191-193 (QAQ) lie on the Lumenal side of the membrane. A helical membrane pass occupies residues 194–214 (IKGTAWYLCLGLPLYPALVIM). At 215–229 (HQISSSYLPRKKVEI) the chain is on the cytoplasmic side.

Heme b is required as a cofactor.

The protein resides in the membrane. It catalyses the reaction monodehydro-L-ascorbate radical(out) + L-ascorbate(in) = monodehydro-L-ascorbate radical(in) + L-ascorbate(out). The enzyme catalyses Fe(3+)(out) + L-ascorbate(in) = monodehydro-L-ascorbate radical(in) + Fe(2+)(out) + H(+). Functionally, probable transmembrane reductase that may use ascorbate as an electron donor and transfer electrons across membranes to reduce monodehydro-L-ascorbate radical and iron cations Fe(3+) in another cellular compartment. The protein is Probable transmembrane reductase CYB561D1 of Mus musculus (Mouse).